We begin with the raw amino-acid sequence, 139 residues long: 3-hydroxyacyl-[acyl-carrier-protein] dehydratase FabZ (139 aa).

The active site involves histidine 46.

This sequence belongs to the thioester dehydratase family. FabZ subfamily.

It is found in the cytoplasm. It carries out the reaction a (3R)-hydroxyacyl-[ACP] = a (2E)-enoyl-[ACP] + H2O. Its function is as follows. Involved in unsaturated fatty acids biosynthesis. Catalyzes the dehydration of short chain beta-hydroxyacyl-ACPs and long chain saturated and unsaturated beta-hydroxyacyl-ACPs. In Streptococcus pyogenes serotype M3 (strain ATCC BAA-595 / MGAS315), this protein is 3-hydroxyacyl-[acyl-carrier-protein] dehydratase FabZ.